The primary structure comprises 83 residues: Defensin-2 (83 aa).

Residues 1-33 (MAGKGVGTPLSALFLLVLLVVTIGMMEVQVAEG) form the signal peptide. 4 disulfide bridges follow: cysteine 36/cysteine 82, cysteine 47/cysteine 67, cysteine 53/cysteine 76, and cysteine 57/cysteine 78.

It belongs to the DEFL family.

The protein localises to the secreted. In terms of biological role, plant defense peptide. Has antifungal activity. The protein is Defensin-2 of Pinus sylvestris (Scotch pine).